Reading from the N-terminus, the 244-residue chain is L-xylulose reductase (244 aa).

Position 1 is an N-acetylmethionine (Met1). An NADP(+)-binding site is contributed by 11 to 39 (LVTGAGKGIGRSIVKALHAAGARVVAVSR). An Omega-N-methylarginine modification is found at Arg21. Ser46 is subject to Phosphoserine. Ser136 provides a ligand contact to substrate. Tyr149 acts as the Proton acceptor in catalysis. Residue Lys153 is part of the active site.

Belongs to the short-chain dehydrogenases/reductases (SDR) family. In terms of assembly, homotetramer.

Its subcellular location is the membrane. It catalyses the reaction xylitol + NADP(+) = L-xylulose + NADPH + H(+). Its function is as follows. Catalyzes the NADPH-dependent reduction of several pentoses, tetroses, trioses, alpha-dicarbonyl compounds and L-xylulose. Participates in the uronate cycle of glucose metabolism. May play a role in the water absorption and cellular osmoregulation in the proximal renal tubules by producing xylitol, an osmolyte, thereby preventing osmolytic stress from occurring in the renal tubules. In Bos taurus (Bovine), this protein is L-xylulose reductase (DCXR).